The following is a 1450-amino-acid chain: Phospholipase B1, membrane-associated (1450 aa).

The first 27 residues, 1–27, serve as a signal peptide directing secretion; sequence MESWPGVSLVGLLLLLLLGQGPSQIHG. Over 28 to 1422 the chain is Extracellular; sequence SSGENTSQPQ…KAKENSNTLY (1395 aa). 3 N-linked (GlcNAc...) asparagine glycosylation sites follow: N32, N45, and N179. Repeat copies occupy residues 41–351, 366–711, and 712–1058. The interval 41–1407 is 4 X 308-326 AA approximate repeats; it reads RTLKNFSFPC…NPFLYTVRNS (1367 aa). Residues S404, D518, and H659 contribute to the active site. N699 carries an N-linked (GlcNAc...) asparagine glycan. Polar residues predominate over residues 708 to 720; sequence TKNSNLGHGTSMS. Residues 708-734 form a disordered region; that stretch reads TKNSNLGHGTSMSCEEKAPSASPPTSV. N-linked (GlcNAc...) asparagine glycans are attached at residues N787, N801, N844, N880, N926, N1059, N1226, N1280, N1383, and N1387. Residues 1068-1407 form repeat 4; it reads IENWGSDFLC…NPFLYTVRNS (340 aa). The segment at 1408 to 1450 is necessary for membrane localization; sequence QILLDKAKENSNTLYWAVPVAAVGGLVVGILGMMLWRTVRLVQ. A helical transmembrane segment spans residues 1423-1443; sequence WAVPVAAVGGLVVGILGMMLW. Over 1444-1450 the chain is Cytoplasmic; that stretch reads RTVRLVQ.

The protein belongs to the 'GDSL' lipolytic enzyme family. Phospholipase B1 subfamily. Post-translationally, undergoes proteolytic cleavage in the ileum. As to expression, expressed in the ileum mucosa, Paneth cells spermatocytes, spermatids and sperm (at protein level). Expressed in the ileum, jejunum, esophagus and testis.

It localises to the apical cell membrane. It catalyses the reaction a 1,2-diacyl-sn-glycero-3-phosphocholine + H2O = a 1-acyl-sn-glycero-3-phosphocholine + a fatty acid + H(+). The enzyme catalyses a 1-O-alkyl-2-acyl-sn-glycero-3-phosphocholine + H2O = a 1-O-alkyl-sn-glycero-3-phosphocholine + a fatty acid + H(+). The catalysed reaction is a 1-acyl-sn-glycero-3-phosphocholine + H2O = sn-glycerol 3-phosphocholine + a fatty acid + H(+). It carries out the reaction a triacylglycerol + H2O = a diacylglycerol + a fatty acid + H(+). It catalyses the reaction 1,2-dihexadecanoyl-sn-glycero-3-phosphocholine + H2O = 1-hexadecanoyl-sn-glycero-3-phosphocholine + hexadecanoate + H(+). The enzyme catalyses 1-hexadecanoyl-2-(9Z-octadecenoyl)-sn-glycero-3-phosphocholine + H2O = 1-hexadecanoyl-sn-glycero-3-phosphocholine + (9Z)-octadecenoate + H(+). The catalysed reaction is 1,2-di-(9Z-octadecenoyl)-sn-glycero-3-phosphocholine + H2O = 1-(9Z-octadecenoyl)-sn-glycero-3-phosphocholine + (9Z)-octadecenoate + H(+). It carries out the reaction 1-hexadecanoyl-2-(9Z,12Z-octadecadienoyl)-sn-glycero-3-phosphocholine + H2O = (9Z,12Z)-octadecadienoate + 1-hexadecanoyl-sn-glycero-3-phosphocholine + H(+). It catalyses the reaction 1-hexadecanoyl-2-(9Z,12Z-octadecadienoyl)-sn-glycero-3-phosphocholine + H2O = 2-(9Z,12Z-octadecadienoyl)-sn-glycero-3-phosphocholine + hexadecanoate + H(+). The enzyme catalyses 1-hexadecanoyl-2-(9Z-octadecenoyl)-sn-glycero-3-phosphoethanolamine + H2O = 1-hexadecanoyl-sn-glycero-3-phosphoethanolamine + (9Z)-octadecenoate + H(+). The catalysed reaction is 1-hexadecanoyl-2-(9Z-octadecenoyl)-sn-glycero-3-phospho-(1'-sn-glycerol) + H2O = 1-hexadecanoyl-sn-glycero-3-phospho-(1'-sn-glycerol) + (9Z)-octadecenoate + H(+). It carries out the reaction 1,2-dihexadecanoyl-sn-glycero-3-phosphocholine + 2 H2O = sn-glycerol 3-phosphocholine + 2 hexadecanoate + 2 H(+). It catalyses the reaction 1-O-hexadecyl-2-(9Z)-octadecenoyl-sn-glycero-3-phosphocholine + H2O = 1-O-hexadecyl-sn-glycero-3-phosphocholine + (9Z)-octadecenoate + H(+). The enzyme catalyses 1-hexadecanoyl-sn-glycero-3-phosphocholine + H2O = sn-glycerol 3-phosphocholine + hexadecanoate + H(+). The catalysed reaction is 1,2,3-tri-(9Z-octadecenoyl)-glycerol + H2O = di-(9Z)-octadecenoylglycerol + (9Z)-octadecenoate + H(+). It carries out the reaction 1-hexadecanoyl-2-(9Z)-octadecenoyl-3-octadecanoyl-sn-glycerol + H2O = 1-hexadecanoyl-2-(9Z-octadecenoyl)-sn-glycerol + octadecanoate + H(+). It catalyses the reaction 1,3-dihexadecanoyl-2-(9Z-octadecenoyl)glycerol + H2O = 1,3-dihexadecanoylglycerol + (9Z)-octadecenoate + H(+). The enzyme catalyses 1,3-dihexadecanoyl-2-(9Z-octadecenoyl)glycerol + H2O = 1-hexadecanoyl-2-(9Z-octadecenoyl)-glycerol + hexadecanoate + H(+). The catalysed reaction is 1-hexadecanoyl-2-(9Z)-octadecenoyl-3-octadecanoyl-sn-glycerol + H2O = 1-hexadecanoyl-3-octadecanoyl-sn-glycerol + (9Z)-octadecenoate + H(+). It carries out the reaction 1-hexadecanoyl-2-(9Z)-octadecenoyl-3-octadecanoyl-sn-glycerol + H2O = 2-(9Z-octadecenoyl)-3-octadecanoyl-sn-glycerol + hexadecanoate + H(+). It catalyses the reaction 1-octadecanoyl-2-(9Z,12Z)-octadecadienoyl-sn-glycerol + H2O = 1-octadecanoyl-sn-glycerol + (9Z,12Z)-octadecadienoate + H(+). The enzyme catalyses 1,2-di-(9Z-octadecenoyl)-sn-glycerol + H2O = 1-(9Z-octadecenoyl)-sn-glycerol + (9Z)-octadecenoate + H(+). The catalysed reaction is 2,3-di-(9Z)-octadecenoyl-sn-glycerol + H2O = 3-(9Z-octadecenoyl)-sn-glycerol + (9Z)-octadecenoate + H(+). It carries out the reaction 1,3-di-(9Z-octadecenoyl)-glycerol + H2O = 1-(9Z-octadecenoyl)-glycerol + (9Z)-octadecenoate + H(+). It catalyses the reaction 1-(9Z-octadecenoyl)-glycerol + H2O = glycerol + (9Z)-octadecenoate + H(+). The enzyme catalyses 2-(9Z-octadecenoyl)-glycerol + H2O = glycerol + (9Z)-octadecenoate + H(+). With respect to regulation, up-regulated by bile acids such as deoxycholate. Inhibited by diisopropyl fluorophosphate. Functionally, calcium-independent membrane-associated phospholipase that catalyzes complete diacylation of phospholipids by hydrolyzing both sn-1 and sn-2 fatty acyl chains attached to the glycerol backbone (phospholipase B activity). Has dual phospholipase and lysophospholipase activities toward diacylphospholipids. Preferentially cleaves sn-2 ester bonds over sn-1 bonds. Acts as a lipase toward glycerolipid substrates. Hydrolyzes fatty acyl chains of diacylglycerols with preference for the sn-2 position and of triacylglycerols with not positional selectivity. May also hydrolyze long chain retinyl esters such as retinyl palmitate. May contribute to digestion of dietary phospholipids, glycerolipids and retinoids, facilitating lipid absorption at the brush border. This chain is Phospholipase B1, membrane-associated (Plb1), found in Rattus norvegicus (Rat).